The primary structure comprises 267 residues: GTP cyclohydrolase FolE2 (267 aa).

Belongs to the GTP cyclohydrolase IV family.

The catalysed reaction is GTP + H2O = 7,8-dihydroneopterin 3'-triphosphate + formate + H(+). It functions in the pathway cofactor biosynthesis; 7,8-dihydroneopterin triphosphate biosynthesis; 7,8-dihydroneopterin triphosphate from GTP: step 1/1. Functionally, converts GTP to 7,8-dihydroneopterin triphosphate. The protein is GTP cyclohydrolase FolE2 of Cupriavidus necator (strain ATCC 17699 / DSM 428 / KCTC 22496 / NCIMB 10442 / H16 / Stanier 337) (Ralstonia eutropha).